The sequence spans 410 residues: LIMR family protein SELMODRAFT_432208 (410 aa).

5 consecutive transmembrane segments (helical) span residues 30–50 (LWWAVYIIDTVLVIPFAIFFY), 67–87 (LWVVILLTVFCLLLGILYAVI), 129–149 (VTLMVSLFFYIFPFFIDLTTL), 156–176 (ICLDLWLKLSVTYVITLNTII), and 179–199 (ILFMMFGGVGMATLPLSLIFA). Residues 245 to 274 (RMFRKNVKKVQQELVFLEDDVEALNEAFPQ) are a coiled coil. 2 helical membrane passes run 288-308 (LVFGIVGLALSIIWLLHIIVF) and 330-350 (GGLLGTTTFAIFCYYLVMSVI). Low complexity predominate over residues 389–400 (PSSAMDSSSWSA). Positions 389 to 410 (PSSAMDSSSWSADRPCRPWPWP) are disordered.

This sequence belongs to the LIMR family.

Its subcellular location is the membrane. This is LIMR family protein SELMODRAFT_432208 from Selaginella moellendorffii (Spikemoss).